Consider the following 273-residue polypeptide: Ribosomal RNA small subunit methyltransferase A (273 aa).

S-adenosyl-L-methionine-binding residues include Asn-18, Leu-20, Gly-45, Glu-66, Asp-91, and Asn-113.

The protein belongs to the class I-like SAM-binding methyltransferase superfamily. rRNA adenine N(6)-methyltransferase family. RsmA subfamily.

It is found in the cytoplasm. It catalyses the reaction adenosine(1518)/adenosine(1519) in 16S rRNA + 4 S-adenosyl-L-methionine = N(6)-dimethyladenosine(1518)/N(6)-dimethyladenosine(1519) in 16S rRNA + 4 S-adenosyl-L-homocysteine + 4 H(+). Specifically dimethylates two adjacent adenosines (A1518 and A1519) in the loop of a conserved hairpin near the 3'-end of 16S rRNA in the 30S particle. May play a critical role in biogenesis of 30S subunits. The polypeptide is Ribosomal RNA small subunit methyltransferase A (Citrobacter koseri (strain ATCC BAA-895 / CDC 4225-83 / SGSC4696)).